The sequence spans 416 residues: Gamma-glutamyl phosphate reductase (416 aa).

Belongs to the gamma-glutamyl phosphate reductase family.

It is found in the cytoplasm. The catalysed reaction is L-glutamate 5-semialdehyde + phosphate + NADP(+) = L-glutamyl 5-phosphate + NADPH + H(+). Its pathway is amino-acid biosynthesis; L-proline biosynthesis; L-glutamate 5-semialdehyde from L-glutamate: step 2/2. Its function is as follows. Catalyzes the NADPH-dependent reduction of L-glutamate 5-phosphate into L-glutamate 5-semialdehyde and phosphate. The product spontaneously undergoes cyclization to form 1-pyrroline-5-carboxylate. In Vibrio cholerae serotype O1 (strain ATCC 39541 / Classical Ogawa 395 / O395), this protein is Gamma-glutamyl phosphate reductase.